Consider the following 452-residue polypeptide: Flavin-containing monooxygenase FMO GS-OX-like 4 (452 aa).

An FAD-binding site is contributed by 17-22 (GAGAAG). 217 to 222 (GNSASA) contacts NADP(+).

This sequence belongs to the FMO family. FAD serves as cofactor.

In terms of biological role, catalyzes the conversion of methylthioalkyl glucosinolates of any chain length into methylsulfinylalkyl glucosinolates. The protein is Flavin-containing monooxygenase FMO GS-OX-like 4 of Arabidopsis thaliana (Mouse-ear cress).